Here is a 254-residue protein sequence, read N- to C-terminus: Adenosylcobinamide-GDP ribazoletransferase (254 aa).

6 helical membrane passes run 28 to 48, 62 to 81, 109 to 129, 138 to 158, 179 to 199, and 200 to 220; these read FRQT…IVAL, IGVY…IDGI, VGVG…LGVL, VTFI…ALLV, LSLF…PYLG, and ASPT…IKQW.

The protein belongs to the CobS family. Mg(2+) is required as a cofactor.

The protein resides in the cell membrane. It catalyses the reaction alpha-ribazole + adenosylcob(III)inamide-GDP = adenosylcob(III)alamin + GMP + H(+). The enzyme catalyses alpha-ribazole 5'-phosphate + adenosylcob(III)inamide-GDP = adenosylcob(III)alamin 5'-phosphate + GMP + H(+). The protein operates within cofactor biosynthesis; adenosylcobalamin biosynthesis; adenosylcobalamin from cob(II)yrinate a,c-diamide: step 7/7. Functionally, joins adenosylcobinamide-GDP and alpha-ribazole to generate adenosylcobalamin (Ado-cobalamin). Also synthesizes adenosylcobalamin 5'-phosphate from adenosylcobinamide-GDP and alpha-ribazole 5'-phosphate. The chain is Adenosylcobinamide-GDP ribazoletransferase from Haloquadratum walsbyi (strain DSM 16790 / HBSQ001).